Consider the following 145-residue polypeptide: Holo-[acyl-carrier-protein] synthase (145 aa).

2 residues coordinate Mg(2+): Asp-9 and Glu-63.

This sequence belongs to the P-Pant transferase superfamily. AcpS family. It depends on Mg(2+) as a cofactor.

The protein localises to the cytoplasm. The enzyme catalyses apo-[ACP] + CoA = holo-[ACP] + adenosine 3',5'-bisphosphate + H(+). Functionally, transfers the 4'-phosphopantetheine moiety from coenzyme A to a Ser of acyl-carrier-protein. The chain is Holo-[acyl-carrier-protein] synthase from Burkholderia vietnamiensis (strain G4 / LMG 22486) (Burkholderia cepacia (strain R1808)).